The chain runs to 175 residues: uncharacterized protein (175 aa).

This is an uncharacterized protein from Acanthamoeba polyphaga (Amoeba).